The following is an 84-amino-acid chain: Acyl carrier protein (84 aa).

Residues 1-75 enclose the Carrier domain; sequence MIFQKIQEFI…DILEYIQQHV (75 aa). S35 carries the O-(pantetheine 4'-phosphoryl)serine modification.

It belongs to the acyl carrier protein (ACP) family. Post-translationally, 4'-phosphopantetheine is transferred from CoA to a specific serine of apo-ACP by AcpS. This modification is essential for activity because fatty acids are bound in thioester linkage to the sulfhydryl of the prosthetic group.

The protein localises to the cytoplasm. Its pathway is lipid metabolism; fatty acid biosynthesis. Carrier of the growing fatty acid chain in fatty acid biosynthesis. This Phytoplasma mali (strain AT) protein is Acyl carrier protein.